Reading from the N-terminus, the 1027-residue chain is A-factor-processing enzyme (1027 aa).

H118 is a Zn(2+) binding site. E121 (proton acceptor) is an active-site residue. Residues H122 and E199 each coordinate Zn(2+).

Belongs to the peptidase M16 family. Zn(2+) serves as cofactor.

Its subcellular location is the membrane. Its activity is regulated as follows. Inhibited by chelating agents like EDTA, TPEN and 1,1-phenanthroline, as well as NEM, free cysteine and DTT. Its function is as follows. Involved in the N-terminal endoproteolytic cleavage of the P2 precursor of the a-factor mating pheromone. Capable of proteolysing the established mammalian insulin-degrading enzymes (IDEs) substrates amyloid-beta peptide and insulin B-chain. This Saccharomyces cerevisiae (strain ATCC 204508 / S288c) (Baker's yeast) protein is A-factor-processing enzyme (STE23).